Here is a 428-residue protein sequence, read N- to C-terminus: YTH domain-containing protein ECT1 (428 aa).

In terms of domain architecture, YTH spans 245 to 382 (AKFFVIKSYS…EHGTKIIKIF (138 aa)). Residues 251–253 (KSY), Asp257, 267–268 (WS), Asn300, Trp324, Trp329, and Trp337 each bind RNA.

In terms of assembly, interacts (via C-terminus) with CIPK1. In terms of tissue distribution, expressed in root apex, shoot apex, lateral root primordia, stamens, carpels and trichomes.

It localises to the nucleus. The protein localises to the cytoplasm. Functionally, specifically recognizes and binds N6-methyladenosine (m6A)-containing RNAs, and regulates mRNA stability. M6A is a modification present at internal sites of mRNAs and some non-coding RNAs and plays a role in mRNA stability and processing. This Arabidopsis thaliana (Mouse-ear cress) protein is YTH domain-containing protein ECT1.